The chain runs to 1025 residues: Multidrug resistance protein MdtC (1025 aa).

12 consecutive transmembrane segments (helical) span residues 3 to 23 (FFAL…AITL), 333 to 353 (EVEQ…FLFL), 360 to 380 (IIPA…MYLC), 387 to 407 (LSLM…IVVL), 431 to 451 (VGFT…PLLL), 463 to 483 (FAVT…TLTP), 528 to 548 (LVGV…ISIP), 853 to 873 (VILI…LYES), 875 to 895 (VHPL…LLAL), 897 to 917 (LFNA…IGIV), 953 to 973 (PIMM…LSGG), and 984 to 1004 (ITIV…TPVV).

The protein belongs to the resistance-nodulation-cell division (RND) (TC 2.A.6) family. MdtC subfamily. Part of a tripartite efflux system composed of MdtA, MdtB and MdtC. MdtC forms a heteromultimer with MdtB.

The protein resides in the cell inner membrane. Its function is as follows. The MdtABC tripartite complex confers resistance against novobiocin and deoxycholate. This Escherichia coli O127:H6 (strain E2348/69 / EPEC) protein is Multidrug resistance protein MdtC.